Reading from the N-terminus, the 202-residue chain is Large ribosomal subunit protein bL25 (202 aa).

This sequence belongs to the bacterial ribosomal protein bL25 family. CTC subfamily. In terms of assembly, part of the 50S ribosomal subunit; part of the 5S rRNA/L5/L18/L25 subcomplex. Contacts the 5S rRNA. Binds to the 5S rRNA independently of L5 and L18.

Functionally, this is one of the proteins that binds to the 5S RNA in the ribosome where it forms part of the central protuberance. The protein is Large ribosomal subunit protein bL25 of Methylococcus capsulatus (strain ATCC 33009 / NCIMB 11132 / Bath).